Reading from the N-terminus, the 201-residue chain is Small ribosomal subunit protein uS4B (201 aa).

One can recognise an S4 RNA-binding domain in the interval 93 to 156; that stretch reads QRLDTVVYRL…RSLAVVRESL (64 aa).

The protein belongs to the universal ribosomal protein uS4 family. In terms of assembly, part of the 30S ribosomal subunit. Contacts protein S5. The interaction surface between S4 and S5 is involved in control of translational fidelity.

Functionally, one of the primary rRNA binding proteins, it binds directly to 16S rRNA where it nucleates assembly of the body of the 30S subunit. Its function is as follows. With S5 and S12 plays an important role in translational accuracy. This is Small ribosomal subunit protein uS4B from Symbiobacterium thermophilum (strain DSM 24528 / JCM 14929 / IAM 14863 / T).